The sequence spans 454 residues: MRNCCRERGFSVGCLEPETSFSCASDVKPSPDMDSVSSQDSLYLPNSIGASLQDQDLWSQFHQEGTEMIITKSGRRMFPQCKIRLFGLHLYAKYMLLVDFVPLDNFRYKWNKNQWEAAGKAEPHPPCRTYVHPDSPASGAHWMKDPICFQKLKLTNNTLDQQGHIILHSMHRYKPRFHVVQSDDMYNSPWGLVQVFSFPETEFTAVTAYQNEKITKLKINHNPFAKGFREQERSHKRDDVLRTLQQSPGKRQKRKKWEDSPEADISDFPKATRVKEESVMDPAVVYQNWVSDHEANQGLTPHSPESEGVNQEQQVPTSSLNFYNKSQHRSSQHLSSPYDLGEPSSRRLTPDVATVPDSDQDSLAVLHGIPTQDSAQERTCSMNISMETPVKQPLRGTIYSSYGTEQWMVPAQGQYQPVGYTAYQTDLSTQGAVAHQHSGMSDWSQYSLFPYSCW.

Residues 57–230 (LWSQFHQEGT…HNPFAKGFRE (174 aa)) constitute a DNA-binding region (T-box). The span at 229-241 (REQERSHKRDDVL) shows a compositional bias: basic and acidic residues. 2 disordered regions span residues 229–274 (REQE…ATRV) and 295–358 (ANQG…VPDS). The segment covering 308–325 (GVNQEQQVPTSSLNFYNK) has biased composition (polar residues).

Forms a repression complex on the promoters of the nodal/nr1 and siamois genes with the maternal factors tcf7l1/tcf3 and pouf5.1/oct-25. Interacts (via C-terminus) with tcf7l1/tcf3 (via N-terminus). Also interacts with the other POU-domain transcription factors pou5f1.2/oct-91 and pou5f1.3/oct-60.

It localises to the nucleus. In terms of biological role, transcription factor required for both mesoderm and endoderm formation in the embryo; signaling determinants and concentration levels may determine which germ layer is formed. Acts together with beta-catenin to activate genes that are responsible for mesoderm induction including wnt-8, eomes t/bra, siamois, mix1 and sox17. Directly binds to promoter DNA. Patterns the mesoderm along the dorsoventral and posterior axis. Activates siamois gene transcription when alone or in combination with beta-catenin, but inhibits siamois transcription in combination with pou5f1.1/oct-25. This chain is T-box protein VegT, found in Xenopus borealis (Kenyan clawed frog).